We begin with the raw amino-acid sequence, 428 residues long: Glucose-1-phosphate adenylyltransferase (428 aa).

Residues Tyr99, Gly164, 179-180 (EK), and Ser190 each bind alpha-D-glucose 1-phosphate.

It belongs to the bacterial/plant glucose-1-phosphate adenylyltransferase family. As to quaternary structure, homotetramer.

The enzyme catalyses alpha-D-glucose 1-phosphate + ATP + H(+) = ADP-alpha-D-glucose + diphosphate. The protein operates within glycan biosynthesis; glycogen biosynthesis. Its function is as follows. Involved in the biosynthesis of ADP-glucose, a building block required for the elongation reactions to produce glycogen. Catalyzes the reaction between ATP and alpha-D-glucose 1-phosphate (G1P) to produce pyrophosphate and ADP-Glc. The protein is Glucose-1-phosphate adenylyltransferase of Thermomicrobium roseum (strain ATCC 27502 / DSM 5159 / P-2).